Reading from the N-terminus, the 136-residue chain is Mediator of RNA polymerase II transcription subunit 31 (136 aa).

The segment covering 117–128 (AEQQQQQQPQAP) has biased composition (low complexity). Residues 117–136 (AEQQQQQQPQAPSHANTTSK) form a disordered region.

The protein belongs to the Mediator complex subunit 31 family. In terms of assembly, component of the Mediator complex.

The protein localises to the nucleus. Its function is as follows. Component of the Mediator complex, a coactivator involved in the regulated transcription of nearly all RNA polymerase II-dependent genes. Mediator functions as a bridge to convey information from gene-specific regulatory proteins to the basal RNA polymerase II transcription machinery. Mediator is recruited to promoters by direct interactions with regulatory proteins and serves as a scaffold for the assembly of a functional preinitiation complex with RNA polymerase II and the general transcription factors. This is Mediator of RNA polymerase II transcription subunit 31 (med31) from Danio rerio (Zebrafish).